Consider the following 315-residue polypeptide: MSESLRIIFAGTPDFAARHLDALLSSGHNVVGVFTQPDRPAGRGKKLMPSPVKVLAEEKGLPVFQPVSLRPQENQQLVADLQADVMVVVAYGLILPKAVLEMPRLGCINVHGSLLPRWRGAAPIQRSLWAGDAETGVTIMQMDVGLDTGDMLYKLSCPITAEDTSGTLYDKLAELGPQGLITTLKQLADGTAKPEVQDETLVTYAEKLSKEEARIDWSLSAAQLERYIRAFNPWPMSWLEIERQPVKVWKASVIDTATNAAPGTILEANKQGIQVATGDGILNLLSLQPAGKKAMSAQDLLNSRREWFVPGNRLA.

113-116 (SLLP) lines the (6S)-5,6,7,8-tetrahydrofolate pocket.

It belongs to the Fmt family.

The enzyme catalyses L-methionyl-tRNA(fMet) + (6R)-10-formyltetrahydrofolate = N-formyl-L-methionyl-tRNA(fMet) + (6S)-5,6,7,8-tetrahydrofolate + H(+). Its function is as follows. Attaches a formyl group to the free amino group of methionyl-tRNA(fMet). The formyl group appears to play a dual role in the initiator identity of N-formylmethionyl-tRNA by promoting its recognition by IF2 and preventing the misappropriation of this tRNA by the elongation apparatus. In Shigella boydii serotype 4 (strain Sb227), this protein is Methionyl-tRNA formyltransferase.